The primary structure comprises 220 residues: NAD(P)H-quinone oxidoreductase subunit M, chloroplastic (220 aa).

Residues 1-37 constitute a chloroplast transit peptide; sequence MATTASPFLSPAKLSLERRLPRATWTARRSVRFPPVR. The interval 20–91 is disordered; that stretch reads LPRATWTARR…PVQPLAESKN (72 aa). The span at 34 to 44 shows a compositional bias: low complexity; that stretch reads PPVRAQDQQQQ.

The protein belongs to the NDH complex subunit M family. Part of the chloroplast NDH complex, composed of a mixture of chloroplast and nucleus encoded subunits. Component of the NDH subcomplex A, at least composed of ndhH, ndhI, ndhJ, ndhK, ndhL, ndhM, ndhN and ndhO.

Its subcellular location is the plastid. The protein localises to the chloroplast thylakoid membrane. It catalyses the reaction a plastoquinone + NADH + (n+1) H(+)(in) = a plastoquinol + NAD(+) + n H(+)(out). It carries out the reaction a plastoquinone + NADPH + (n+1) H(+)(in) = a plastoquinol + NADP(+) + n H(+)(out). Functionally, NDH shuttles electrons from NAD(P)H:plastoquinone, via FMN and iron-sulfur (Fe-S) centers, to quinones in the photosynthetic chain and possibly in a chloroplast respiratory chain. The immediate electron acceptor for the enzyme in this species is believed to be plastoquinone. Couples the redox reaction to proton translocation, and thus conserves the redox energy in a proton gradient. The polypeptide is NAD(P)H-quinone oxidoreductase subunit M, chloroplastic (Oryza sativa subsp. indica (Rice)).